The primary structure comprises 299 residues: NAD kinase (299 aa).

D75 acts as the Proton acceptor in catalysis. NAD(+) is bound by residues 75-76 (DG), 149-150 (ND), R177, D179, 190-195 (TAYALS), A214, and Q248.

It belongs to the NAD kinase family. Requires a divalent metal cation as cofactor.

Its subcellular location is the cytoplasm. The catalysed reaction is NAD(+) + ATP = ADP + NADP(+) + H(+). Functionally, involved in the regulation of the intracellular balance of NAD and NADP, and is a key enzyme in the biosynthesis of NADP. Catalyzes specifically the phosphorylation on 2'-hydroxyl of the adenosine moiety of NAD to yield NADP. The protein is NAD kinase of Burkholderia thailandensis (strain ATCC 700388 / DSM 13276 / CCUG 48851 / CIP 106301 / E264).